Consider the following 64-residue polypeptide: Alpha-mammal toxin AnCra1 (64 aa).

The LCN-type CS-alpha/beta domain occupies 2-64 (KDGYIVDDVN…VRTKGPGRCN (63 aa)). 4 disulfides stabilise this stretch: Cys12/Cys63, Cys16/Cys36, Cys22/Cys46, and Cys26/Cys48.

Belongs to the long (4 C-C) scorpion toxin superfamily. Sodium channel inhibitor family. Alpha subfamily. In terms of tissue distribution, expressed by the venom gland.

It is found in the secreted. Functionally, alpha toxins bind voltage-independently at site-3 of sodium channels (Nav) and inhibit the inactivation of the activated channels, thereby blocking neuronal transmission. This toxin is active against mammals. The recombinant toxin selectively inhibits the fast inactivation of hNav1.7/SCN9A channel (EC(50)=136.7 nM). Is potent in inhibiting the fast inactivation of hNav1.7 and has little effect on the steady-state inactivation. In vivo, intravenous injection into mice induces muscle contraction, leading to severe paralysis and death. In Androctonus crassicauda (Arabian fat-tailed scorpion), this protein is Alpha-mammal toxin AnCra1.